Consider the following 208-residue polypeptide: MTFLSTSAFSPLAFSLGLLLVVATAFPTPGPLGGDATSNRLPLTSADKMEELIKYILGKISALKKEMCDNYNKCEDSKEALAENNLNLPKLAEKDGCFQSGFNQETCLTRITTGLQEFQIYLKFLQDKYEGDEENAKSVYTSTNVLLQMLKRKGKNQDEVTIPVPTVEVGLQAKLQSQEEWLRHTTIHLTLRRLEDFLQFSLRAVRIM.

The first 27 residues, 1-27, serve as a signal peptide directing secretion; sequence MTFLSTSAFSPLAFSLGLLLVVATAFP. A disulfide bridge connects residues cysteine 68 and cysteine 74. The residue at position 77 (serine 77) is a Phosphoserine. Cysteine 97 and cysteine 107 are disulfide-bonded.

This sequence belongs to the IL-6 superfamily. Component of a hexamer of two molecules each of IL6, IL6R and IL6ST; first binds to IL6R to associate with the signaling subunit IL6ST. Interacts with IL6R (via the N-terminal ectodomain); this interaction may be affected by IL6R-binding with SORL1, hence decreasing IL6 cis signaling. Interacts with SORL1 (via the N-terminal ectodomain); this interaction leads to IL6 internalization and lysosomal degradation. May form a trimeric complex with the soluble SORL1 ectodomain and soluble IL6R receptor; this interaction might stabilize circulating IL6, hence promoting IL6 trans signaling.

It localises to the secreted. Functionally, cytokine with a wide variety of biological functions in immunity, tissue regeneration, and metabolism. Binds to IL6R, then the complex associates to the signaling subunit IL6ST/gp130 to trigger the intracellular IL6-signaling pathway. The interaction with the membrane-bound IL6R and IL6ST stimulates 'classic signaling', whereas the binding of IL6 and soluble IL6R to IL6ST stimulates 'trans-signaling'. Alternatively, 'cluster signaling' occurs when membrane-bound IL6:IL6R complexes on transmitter cells activate IL6ST receptors on neighboring receiver cells. In terms of biological role, IL6 is a potent inducer of the acute phase response. Rapid production of IL6 contributes to host defense during infection and tissue injury, but excessive IL6 synthesis is involved in disease pathology. In the innate immune response, is synthesized by myeloid cells, such as macrophages and dendritic cells, upon recognition of pathogens through toll-like receptors (TLRs) at the site of infection or tissue injury. In the adaptive immune response, is required for the differentiation of B cells into immunoglobulin-secreting cells. Plays a major role in the differentiation of CD4(+) T cell subsets. Essential factor for the development of T follicular helper (Tfh) cells that are required for the induction of germinal-center formation. Required to drive naive CD4(+) T cells to the Th17 lineage. Also required for proliferation of myeloma cells and the survival of plasmablast cells. Its function is as follows. Acts as an essential factor in bone homeostasis and on vessels directly or indirectly by induction of VEGF, resulting in increased angiogenesis activity and vascular permeability. Induces, through 'trans-signaling' and synergistically with IL1B and TNF, the production of VEGF. Involved in metabolic controls, is discharged into the bloodstream after muscle contraction increasing lipolysis and improving insulin resistance. 'Trans-signaling' in central nervous system also regulates energy and glucose homeostasis. Mediates, through GLP-1, crosstalk between insulin-sensitive tissues, intestinal L cells and pancreatic islets to adapt to changes in insulin demand. Also acts as a myokine. Plays a protective role during liver injury, being required for maintenance of tissue regeneration. Also has a pivotal role in iron metabolism by regulating HAMP/hepcidin expression upon inflammation or bacterial infection. Through activation of IL6ST-YAP-NOTCH pathway, induces inflammation-induced epithelial regeneration. This Felis catus (Cat) protein is Interleukin-6 (IL6).